Reading from the N-terminus, the 155-residue chain is Sec-independent protein translocase protein TatB (155 aa).

Residues 1–21 (MIDLGISKIALIGAVALIVIG) form a helical membrane-spanning segment. 2 disordered regions span residues 81–103 (ASDFEKSWSETTGSTSSDALPGF) and 131–155 (SGIRTKAQSGAARVARFRPQPSRKA). Residues 89–98 (SETTGSTSSD) are compositionally biased toward polar residues.

The protein belongs to the TatB family. As to quaternary structure, the Tat system comprises two distinct complexes: a TatABC complex, containing multiple copies of TatA, TatB and TatC subunits, and a separate TatA complex, containing only TatA subunits. Substrates initially bind to the TatABC complex, which probably triggers association of the separate TatA complex to form the active translocon.

It is found in the cell inner membrane. In terms of biological role, part of the twin-arginine translocation (Tat) system that transports large folded proteins containing a characteristic twin-arginine motif in their signal peptide across membranes. Together with TatC, TatB is part of a receptor directly interacting with Tat signal peptides. TatB may form an oligomeric binding site that transiently accommodates folded Tat precursor proteins before their translocation. In Polaromonas naphthalenivorans (strain CJ2), this protein is Sec-independent protein translocase protein TatB.